A 467-amino-acid chain; its full sequence is MSISSSNVTSGFIDIATKDEIEKYMYGGKTSTAYFVRETRKATWFTQVPVSLTRANGSANFGSEWSASISRAGDYLLYTWLRVRIPSVTLLSTNQFGANGRIRWCRNFMHNLIRECSITFNDLVAARFDHYHLDFWAAFTTPASKAVGYDNMIGNVSALIQPQPVPVAPATVSLPEADLNLPLPFFFSRDSGVALPTAALPYNEMRINFQFHDWQRLLILDNIAAVASQTVVPVVGATSDIATAPVLHHGTVWGNYAIVSNEERRRMGCSVRDILVEQVQTAPRHVWNPTTNDAPNYDIRFSHAIKALFFAVRNTTFSNQPSNYTTASPVITSTTVILEPSTGAFDPIHHTTLIYENTNRLNHMGSDYFSLVNPWYHAPTIPGLTGFHEYSYSLAFNEIDPMGSTNYGKLTNISIVPTASPAAKVGAAGTGPAGSGQNFPQTFEFIVTALNNNIIRISGGALGFPVL.

This sequence belongs to the NCLDV major capsid protein family. As to quaternary structure, homotrimer.

Its subcellular location is the virion. In terms of biological role, major capsid protein that self assembles to form an icosahedral capsid with a T=147 symmetry. Represents around 50% of the total virion protein mass. This is Major capsid protein (MCP) from Invertebrate iridescent virus 6 (IIV-6).